A 348-amino-acid polypeptide reads, in one-letter code: EGF-like domain containing protein 1 (348 aa).

Residues 1 to 19 (MFYLSTFMTIVISLSLVSC) form the signal peptide. The EGF-like domain occupies 60–92 (TGSDCKVTCQNNGRCYDGNKCLCSSDYTGHLCE). 3 cysteine pairs are disulfide-bonded: C64–C74, C68–C80, and C82–C91. The 244-residue stretch at 99 to 342 (RCTLDGVVFE…PTCAAPAVSQ (244 aa)) folds into the ZP domain.

Prismatic layer of shell (at protein level). Expressed primarily in the mantle with highest level in the mantle edge and lower level in the mantle pallium.

The protein localises to the secreted. The chain is EGF-like domain containing protein 1 from Margaritifera margaritifera (Freshwater pearl mussel).